The sequence spans 68 residues: Large ribosomal subunit protein uL29 (68 aa).

This sequence belongs to the universal ribosomal protein uL29 family.

This chain is Large ribosomal subunit protein uL29, found in Chlorobaculum parvum (strain DSM 263 / NCIMB 8327) (Chlorobium vibrioforme subsp. thiosulfatophilum).